A 458-amino-acid polypeptide reads, in one-letter code: BPI fold-containing family B member 2 (458 aa).

Residues 1 to 20 form the signal peptide; it reads MAWASRLGLLLALLLPVVGA. Thr52 is subject to Phosphothreonine; by FAM20C. At Ser60 the chain carries Phosphoserine; by FAM20C. Residues Asn96, Asn151, Asn293, and Asn332 are each glycosylated (N-linked (GlcNAc...) asparagine). A disulfide bridge links Cys137 with Cys174.

The protein belongs to the BPI/LBP/Plunc superfamily. BPI/LBP family. In terms of tissue distribution, highly expressed in tonsils, especially in hypertrophic tonsils. Detected at very low levels in fetal liver.

The protein localises to the secreted. The polypeptide is BPI fold-containing family B member 2 (BPIFB2) (Homo sapiens (Human)).